The primary structure comprises 439 residues: Tryptophan synthase beta chain 2 (439 aa).

Lysine 99 is subject to N6-(pyridoxal phosphate)lysine.

The protein belongs to the TrpB family. As to quaternary structure, tetramer of two alpha and two beta chains. Pyridoxal 5'-phosphate serves as cofactor.

It carries out the reaction (1S,2R)-1-C-(indol-3-yl)glycerol 3-phosphate + L-serine = D-glyceraldehyde 3-phosphate + L-tryptophan + H2O. Its pathway is amino-acid biosynthesis; L-tryptophan biosynthesis; L-tryptophan from chorismate: step 5/5. In terms of biological role, the beta subunit is responsible for the synthesis of L-tryptophan from indole and L-serine. The sequence is that of Tryptophan synthase beta chain 2 (trpB2) from Corynebacterium efficiens (strain DSM 44549 / YS-314 / AJ 12310 / JCM 11189 / NBRC 100395).